A 101-amino-acid polypeptide reads, in one-letter code: Urease subunit beta (101 aa).

Belongs to the urease beta subunit family. Heterotrimer of UreA (gamma), UreB (beta) and UreC (alpha) subunits. Three heterotrimers associate to form the active enzyme.

The protein resides in the cytoplasm. The enzyme catalyses urea + 2 H2O + H(+) = hydrogencarbonate + 2 NH4(+). Its pathway is nitrogen metabolism; urea degradation; CO(2) and NH(3) from urea (urease route): step 1/1. The polypeptide is Urease subunit beta (Allorhizobium ampelinum (strain ATCC BAA-846 / DSM 112012 / S4) (Agrobacterium vitis (strain S4))).